Consider the following 343-residue polypeptide: GTP 3',8-cyclase (343 aa).

Residues 19–244 form the Radical SAM core domain; that stretch reads PFGRNISYLR…TDLDDSTGGP (226 aa). Position 28 (arginine 28) interacts with GTP. The [4Fe-4S] cluster site is built by cysteine 35 and cysteine 39. Tyrosine 41 is a binding site for S-adenosyl-L-methionine. Position 42 (cysteine 42) interacts with [4Fe-4S] cluster. Residue arginine 77 coordinates GTP. Glycine 81 is a binding site for S-adenosyl-L-methionine. Threonine 111 contributes to the GTP binding site. Residue serine 135 participates in S-adenosyl-L-methionine binding. Lysine 171 contributes to the GTP binding site. Methionine 205 is an S-adenosyl-L-methionine binding site. Positions 268 and 271 each coordinate [4Fe-4S] cluster. GTP is bound at residue 273-275; it reads RVR. Residue cysteine 285 participates in [4Fe-4S] cluster binding.

It belongs to the radical SAM superfamily. MoaA family. Monomer and homodimer. The cofactor is [4Fe-4S] cluster.

It catalyses the reaction GTP + AH2 + S-adenosyl-L-methionine = (8S)-3',8-cyclo-7,8-dihydroguanosine 5'-triphosphate + 5'-deoxyadenosine + L-methionine + A + H(+). The protein operates within cofactor biosynthesis; molybdopterin biosynthesis. Functionally, catalyzes the cyclization of GTP to (8S)-3',8-cyclo-7,8-dihydroguanosine 5'-triphosphate. The polypeptide is GTP 3',8-cyclase (Nitrobacter winogradskyi (strain ATCC 25391 / DSM 10237 / CIP 104748 / NCIMB 11846 / Nb-255)).